A 328-amino-acid chain; its full sequence is Formimidoylglutamase (328 aa).

His-133, Asp-159, His-161, Asp-163, Asp-253, and Asp-255 together coordinate Mn(2+).

Belongs to the arginase family. Mn(2+) serves as cofactor.

It carries out the reaction N-formimidoyl-L-glutamate + H2O = formamide + L-glutamate. Its pathway is amino-acid degradation; L-histidine degradation into L-glutamate; L-glutamate from N-formimidoyl-L-glutamate (hydrolase route): step 1/1. Functionally, catalyzes the conversion of N-formimidoyl-L-glutamate to L-glutamate and formamide. This is Formimidoylglutamase from Streptococcus pyogenes serotype M18 (strain MGAS8232).